Consider the following 460-residue polypeptide: Chromosomal replication initiator protein DnaA (460 aa).

Residues 1 to 91 (MSLINPKVSA…LLWQNEDKSI (91 aa)) are domain I, interacts with DnaA modulators. The interval 91–122 (ICSIDIQVTEEKNSSSSIISKNKEESVNNLGS) is domain II. The segment at 123-342 (PLDPRFTFDN…GALNKVAHTS (220 aa)) is domain III, AAA+ region. Gly169, Gly171, Lys172, and Thr173 together coordinate ATP. The tract at residues 343 to 460 (LIGRSMTVES…EINQLRKMFK (118 aa)) is domain IV, binds dsDNA.

The protein belongs to the DnaA family. In terms of assembly, oligomerizes as a right-handed, spiral filament on DNA at oriC.

The protein localises to the cytoplasm. In terms of biological role, plays an essential role in the initiation and regulation of chromosomal replication. ATP-DnaA binds to the origin of replication (oriC) to initiate formation of the DNA replication initiation complex once per cell cycle. Binds the DnaA box (a 9 base pair repeat at the origin) and separates the double-stranded (ds)DNA. Forms a right-handed helical filament on oriC DNA; dsDNA binds to the exterior of the filament while single-stranded (ss)DNA is stabiized in the filament's interior. The ATP-DnaA-oriC complex binds and stabilizes one strand of the AT-rich DNA unwinding element (DUE), permitting loading of DNA polymerase. After initiation quickly degrades to an ADP-DnaA complex that is not apt for DNA replication. Binds acidic phospholipids. The protein is Chromosomal replication initiator protein DnaA of Wolbachia sp. subsp. Brugia malayi (strain TRS).